The sequence spans 168 residues: uncharacterized protein (168 aa).

Residues 1-15 are compositionally biased toward basic and acidic residues; sequence MKEASDREEAPKMVE. The disordered stretch occupies residues 1 to 36; sequence MKEASDREEAPKMVEKNYSTGFRKAHGEKDQSVTKP.

Its subcellular location is the cytoplasm. This is an uncharacterized protein from Saccharomyces cerevisiae (strain ATCC 204508 / S288c) (Baker's yeast).